Here is a 766-residue protein sequence, read N- to C-terminus: Tripartite terminase subunit 1 (766 aa).

A C3H1-type zinc finger spans residues 191–219 (CSVCFEELCVTANQGEAVHRRLLECTCDH). ATP is bound at residue 683-690 (FSSVFHCG).

The protein belongs to the herpesviridae TRM1 protein family. Associates with TRM2 and TRM3 to form the tripartite terminase complex. Interacts with portal protein.

Its subcellular location is the host nucleus. In terms of biological role, component of the molecular motor that translocates viral genomic DNA in empty capsid during DNA packaging. Forms a tripartite terminase complex together with TRM2 and TRM3 in the host cytoplasm. Once the complex reaches the host nucleus, it interacts with the capsid portal vertex. This portal forms a ring in which genomic DNA is translocated into the capsid. TRM1 carries an endonuclease activity that plays an important role for the cleavage of concatemeric viral DNA into unit length genomes. The sequence is that of Tripartite terminase subunit 1 from Equus caballus (Horse).